The primary structure comprises 593 residues: Proteasome-associated ATPase (593 aa).

Positions 23–95 (LLSQISYLEE…LKEEVDRLGQ (73 aa)) form a coiled coil. ATP is bound at residue 282–287 (GCGKTL). The tract at residues 592–593 (YL) is docks into pockets in the proteasome alpha-ring.

Belongs to the AAA ATPase family. Homohexamer. Assembles into a hexameric ring structure that caps the 20S proteasome core. Strongly interacts with the prokaryotic ubiquitin-like protein Pup through a hydrophobic interface; the interacting region of ARC lies in its N-terminal coiled-coil domain. There is one Pup binding site per ARC hexamer ring. Upon ATP-binding, the C-terminus of ARC interacts with the alpha-rings of the proteasome core, possibly by binding to the intersubunit pockets.

It participates in protein degradation; proteasomal Pup-dependent pathway. ATPase which is responsible for recognizing, binding, unfolding and translocation of pupylated proteins into the bacterial 20S proteasome core particle. May be essential for opening the gate of the 20S proteasome via an interaction with its C-terminus, thereby allowing substrate entry and access to the site of proteolysis. Thus, the C-termini of the proteasomal ATPase may function like a 'key in a lock' to induce gate opening and therefore regulate proteolysis. In Geodermatophilus obscurus (strain ATCC 25078 / DSM 43160 / JCM 3152 / CCUG 61914 / KCC A-0152 / KCTC 9177 / NBRC 13315 / NRRL B-3577 / G-20), this protein is Proteasome-associated ATPase.